Here is a 353-residue protein sequence, read N- to C-terminus: uncharacterized protein (353 aa).

Helical transmembrane passes span Ala16–Gly36, Val77–Leu97, Tyr106–Leu128, Ser140–Ala160, Leu167–Ala187, Gly208–Ile228, Leu263–Pro283, His296–Ser316, and Ile323–Leu343.

This sequence belongs to the binding-protein-dependent transport system permease family. FecCD subfamily. The complex is composed of two ATP-binding proteins (YvrA), two transmembrane proteins (YvrB) and a solute-binding protein (YvrC).

The protein localises to the cell membrane. Probably part of an ABC transporter complex. Probably responsible for the translocation of the substrate across the membrane. This is an uncharacterized protein from Bacillus subtilis (strain 168).